We begin with the raw amino-acid sequence, 358 residues long: NADH-quinone oxidoreductase subunit H (358 aa).

8 consecutive transmembrane segments (helical) span residues 29-49 (LIKI…LTLW), 95-115 (GLFY…WAVI), 130-150 (LLLV…AGWA), 176-196 (FCFL…IVAV), 206-226 (GLGF…VYLI), 258-280 (GFAI…AVVM), 297-317 (GWIW…WIRA), and 334-354 (IFIP…LSPW).

This sequence belongs to the complex I subunit 1 family. As to quaternary structure, NDH-1 is composed of 14 different subunits. Subunits NuoA, H, J, K, L, M, N constitute the membrane sector of the complex.

Its subcellular location is the cell inner membrane. It catalyses the reaction a quinone + NADH + 5 H(+)(in) = a quinol + NAD(+) + 4 H(+)(out). Its function is as follows. NDH-1 shuttles electrons from NADH, via FMN and iron-sulfur (Fe-S) centers, to quinones in the respiratory chain. The immediate electron acceptor for the enzyme in this species is believed to be ubiquinone. Couples the redox reaction to proton translocation (for every two electrons transferred, four hydrogen ions are translocated across the cytoplasmic membrane), and thus conserves the redox energy in a proton gradient. This subunit may bind ubiquinone. The sequence is that of NADH-quinone oxidoreductase subunit H from Acidovorax sp. (strain JS42).